The primary structure comprises 364 residues: Aminomethyltransferase (364 aa).

It belongs to the GcvT family. In terms of assembly, the glycine cleavage system is composed of four proteins: P, T, L and H.

It carries out the reaction N(6)-[(R)-S(8)-aminomethyldihydrolipoyl]-L-lysyl-[protein] + (6S)-5,6,7,8-tetrahydrofolate = N(6)-[(R)-dihydrolipoyl]-L-lysyl-[protein] + (6R)-5,10-methylene-5,6,7,8-tetrahydrofolate + NH4(+). Its function is as follows. The glycine cleavage system catalyzes the degradation of glycine. This chain is Aminomethyltransferase, found in Klebsiella pneumoniae subsp. pneumoniae (strain ATCC 700721 / MGH 78578).